Here is a 143-residue protein sequence, read N- to C-terminus: Sarcoplasmic/endoplasmic reticulum calcium ATPase (143 aa).

This sequence belongs to the cation transport ATPase (P-type) (TC 3.A.3) family. Type IIA subfamily.

The protein resides in the endoplasmic reticulum membrane. It localises to the sarcoplasmic reticulum membrane. The catalysed reaction is Ca(2+)(in) + ATP + H2O = Ca(2+)(out) + ADP + phosphate + H(+). This magnesium-dependent enzyme catalyzes the hydrolysis of ATP coupled with the transport of calcium. Transports calcium ions from the cytosol into the sarcoplasmic/endoplasmic reticulum lumen. Contributes to calcium sequestration involved in muscular excitation/contraction. The chain is Sarcoplasmic/endoplasmic reticulum calcium ATPase from Chionoecetes opilio (Atlantic snow crab).